Reading from the N-terminus, the 174-residue chain is ATP-dependent protease subunit HslV (174 aa).

The active site involves Thr-2. Residues Gly-157, Cys-160, and Thr-163 each contribute to the Na(+) site.

It belongs to the peptidase T1B family. HslV subfamily. As to quaternary structure, a double ring-shaped homohexamer of HslV is capped on each side by a ring-shaped HslU homohexamer. The assembly of the HslU/HslV complex is dependent on binding of ATP.

The protein localises to the cytoplasm. The catalysed reaction is ATP-dependent cleavage of peptide bonds with broad specificity.. With respect to regulation, allosterically activated by HslU binding. Functionally, protease subunit of a proteasome-like degradation complex believed to be a general protein degrading machinery. This Shewanella woodyi (strain ATCC 51908 / MS32) protein is ATP-dependent protease subunit HslV.